The sequence spans 385 residues: 1-deoxy-D-xylulose 5-phosphate reductoisomerase (385 aa).

The NADPH site is built by threonine 10, glycine 11, serine 12, isoleucine 13, and asparagine 124. Lysine 125 is a 1-deoxy-D-xylulose 5-phosphate binding site. Glutamate 126 contributes to the NADPH binding site. Aspartate 150 contacts Mn(2+). Positions 151, 152, 176, and 199 each coordinate 1-deoxy-D-xylulose 5-phosphate. Glutamate 152 is a binding site for Mn(2+). Glycine 205 is an NADPH binding site. Serine 212, asparagine 217, lysine 218, and glutamate 221 together coordinate 1-deoxy-D-xylulose 5-phosphate. Mn(2+) is bound at residue glutamate 221.

It belongs to the DXR family. It depends on Mg(2+) as a cofactor. Requires Mn(2+) as cofactor.

It catalyses the reaction 2-C-methyl-D-erythritol 4-phosphate + NADP(+) = 1-deoxy-D-xylulose 5-phosphate + NADPH + H(+). It participates in isoprenoid biosynthesis; isopentenyl diphosphate biosynthesis via DXP pathway; isopentenyl diphosphate from 1-deoxy-D-xylulose 5-phosphate: step 1/6. In terms of biological role, catalyzes the NADPH-dependent rearrangement and reduction of 1-deoxy-D-xylulose-5-phosphate (DXP) to 2-C-methyl-D-erythritol 4-phosphate (MEP). This is 1-deoxy-D-xylulose 5-phosphate reductoisomerase from Clostridium botulinum (strain Alaska E43 / Type E3).